The chain runs to 146 residues: 3-hydroxyacyl-[acyl-carrier-protein] dehydratase FabZ (146 aa).

His-51 is an active-site residue.

This sequence belongs to the thioester dehydratase family. FabZ subfamily.

The protein localises to the cytoplasm. The catalysed reaction is a (3R)-hydroxyacyl-[ACP] = a (2E)-enoyl-[ACP] + H2O. Its function is as follows. Involved in unsaturated fatty acids biosynthesis. Catalyzes the dehydration of short chain beta-hydroxyacyl-ACPs and long chain saturated and unsaturated beta-hydroxyacyl-ACPs. This chain is 3-hydroxyacyl-[acyl-carrier-protein] dehydratase FabZ, found in Staphylococcus aureus (strain Mu3 / ATCC 700698).